The chain runs to 282 residues: 2-dehydro-3-deoxyphosphooctonate aldolase (282 aa).

The protein belongs to the KdsA family.

The protein resides in the cytoplasm. It catalyses the reaction D-arabinose 5-phosphate + phosphoenolpyruvate + H2O = 3-deoxy-alpha-D-manno-2-octulosonate-8-phosphate + phosphate. Its pathway is carbohydrate biosynthesis; 3-deoxy-D-manno-octulosonate biosynthesis; 3-deoxy-D-manno-octulosonate from D-ribulose 5-phosphate: step 2/3. It participates in bacterial outer membrane biogenesis; lipopolysaccharide biosynthesis. The chain is 2-dehydro-3-deoxyphosphooctonate aldolase from Shewanella pealeana (strain ATCC 700345 / ANG-SQ1).